Consider the following 352-residue polypeptide: tRNA (guanine(26)-N(2))-dimethyltransferase (352 aa).

One can recognise a Trm1 methyltransferase domain in the interval 4-350 (ILNKEGAVEF…ANYDEIARIL (347 aa)). 5 residues coordinate S-adenosyl-L-methionine: Arg-39, Arg-65, Asp-83, Asp-109, and Ala-110.

Belongs to the class I-like SAM-binding methyltransferase superfamily. Trm1 family.

It catalyses the reaction guanosine(26) in tRNA + 2 S-adenosyl-L-methionine = N(2)-dimethylguanosine(26) in tRNA + 2 S-adenosyl-L-homocysteine + 2 H(+). Functionally, dimethylates a single guanine residue at position 26 of a number of tRNAs using S-adenosyl-L-methionine as donor of the methyl groups. The chain is tRNA (guanine(26)-N(2))-dimethyltransferase from Pyrobaculum islandicum (strain DSM 4184 / JCM 9189 / GEO3).